A 570-amino-acid polypeptide reads, in one-letter code: Urease subunit alpha (570 aa).

Residues 131–570 form the Urease domain; that stretch reads GGMDSHIHFI…LPMAQRYFLF (440 aa). 3 residues coordinate Ni(2+): His136, His138, and Lys219. Lys219 bears the N6-carboxylysine mark. His221 is a substrate binding site. Residues His248 and His274 each contribute to the Ni(2+) site. The Proton donor role is filled by His322. Ni(2+) is bound at residue Asp362.

It belongs to the metallo-dependent hydrolases superfamily. Urease alpha subunit family. In terms of assembly, heterotrimer of UreA (gamma), UreB (beta) and UreC (alpha) subunits. Three heterotrimers associate to form the active enzyme. Requires Ni cation as cofactor. Post-translationally, carboxylation allows a single lysine to coordinate two nickel ions.

The protein resides in the cytoplasm. The catalysed reaction is urea + 2 H2O + H(+) = hydrogencarbonate + 2 NH4(+). It functions in the pathway nitrogen metabolism; urea degradation; CO(2) and NH(3) from urea (urease route): step 1/1. The chain is Urease subunit alpha from Rhizobium meliloti (strain 1021) (Ensifer meliloti).